The chain runs to 639 residues: Mediator of RNA polymerase II transcription subunit 17 (639 aa).

Over residues 32 to 43 (ASATVTTNGTTA) the composition is skewed to polar residues. 2 disordered regions span residues 32–68 (ASAT…EEHS) and 130–159 (MGDA…NNDS). Residues 48 to 57 (DSGSQQSVSS) are compositionally biased toward low complexity. The segment covering 58-68 (APIQQNSEEHS) has biased composition (polar residues). Residues 245-271 (WKLRSLEDSKALLKENYAKLQKSLEVE) are a coiled coil.

It belongs to the Mediator complex subunit 17 family. Component of the Mediator complex.

It is found in the nucleus. Functionally, component of the Mediator complex, a coactivator involved in the regulated transcription of nearly all RNA polymerase II-dependent genes. Mediator functions as a bridge to convey information from gene-specific regulatory proteins to the basal RNA polymerase II transcription machinery. Mediator is recruited to promoters by direct interactions with regulatory proteins and serves as a scaffold for the assembly of a functional preinitiation complex with RNA polymerase II and the general transcription factors. This Eremothecium gossypii (strain ATCC 10895 / CBS 109.51 / FGSC 9923 / NRRL Y-1056) (Yeast) protein is Mediator of RNA polymerase II transcription subunit 17 (SRB4).